Consider the following 435-residue polypeptide: Glutamyl-tRNA reductase (435 aa).

Residues 49–52 (TCNR), Ser-109, 114–116 (EGQ), and Gln-120 each bind substrate. The active-site Nucleophile is Cys-50. 198–203 (GAGRMS) contacts NADP(+).

It belongs to the glutamyl-tRNA reductase family. As to quaternary structure, homodimer.

It carries out the reaction (S)-4-amino-5-oxopentanoate + tRNA(Glu) + NADP(+) = L-glutamyl-tRNA(Glu) + NADPH + H(+). It participates in porphyrin-containing compound metabolism; protoporphyrin-IX biosynthesis; 5-aminolevulinate from L-glutamyl-tRNA(Glu): step 1/2. Its pathway is porphyrin-containing compound metabolism; chlorophyll biosynthesis. Functionally, catalyzes the NADPH-dependent reduction of glutamyl-tRNA(Glu) to glutamate 1-semialdehyde (GSA). In Prochlorococcus marinus (strain MIT 9211), this protein is Glutamyl-tRNA reductase.